The chain runs to 205 residues: Peroxynitrite isomerase (205 aa).

The disordered stretch occupies residues 1 to 23; it reads MTEPDPAAAEQRPSVGRNLPTFQ. A GXWXGXG motif is present at residues 52–58; the sequence is GVWRGEG. Heme b is bound by residues threonine 63, lysine 168, and histidine 195.

The protein belongs to the nitrobindin family. As to quaternary structure, homodimer. Heme b serves as cofactor.

The enzyme catalyses peroxynitrite = nitrate. It functions in the pathway nitrogen metabolism. Heme-binding protein able to scavenge peroxynitrite and to protect free L-tyrosine against peroxynitrite-mediated nitration, by acting as a peroxynitrite isomerase that converts peroxynitrite to nitrate. Therefore, this protein likely plays a role in peroxynitrite sensing and in the detoxification of reactive nitrogen and oxygen species (RNS and ROS, respectively). Is able to bind nitric oxide (NO) in vitro, but may act as a sensor of peroxynitrite levels in vivo. This chain is Peroxynitrite isomerase, found in Mycobacteroides abscessus (strain ATCC 19977 / DSM 44196 / CCUG 20993 / CIP 104536 / JCM 13569 / NCTC 13031 / TMC 1543 / L948) (Mycobacterium abscessus).